The primary structure comprises 641 residues: Protein TIC 62, chloroplastic (641 aa).

A chloroplast-targeting transit peptide spans 1–63; the sequence is MEGTCFLRGQ…LSLRASGPIR (63 aa). At Ala-64 the chain carries N-acetylalanine. 84 to 113 is a binding site for NADP(+); sequence VFVAGATGKVGSRTVRELLKLGFRVRAGVR. Positions 328 to 641 are disordered; sequence SKRPYVPPPK…SPLPSPVTNH (314 aa). The span at 359–372 shows a compositional bias: basic and acidic residues; that stretch reads APKEDEAPPKEKNV. 2 tandem repeats follow at residues 376–397 and 444–465. The tract at residues 376–638 is 4 X 22 AA approximate repeats; sequence PLSPYASYED…PPTSPLPSPV (263 aa). The span at 393–402 shows a compositional bias: low complexity; that stretch reads IPNSTTSVSP. The span at 435–444 shows a compositional bias: basic and acidic residues; it reads KQVEEKKERP. Residues 485 to 528 show a composition bias toward low complexity; sequence SSTVAKTVTETAVATSVTETSVATSVPETAVATSVTETAAPATS. Repeat 3 spans residues 532-553; the sequence is PLSPYAIYADLKPPTSPTPAST. Polar residues predominate over residues 599–612; the sequence is AIDTSLASGDNTAQ. Copy 4 of the repeat occupies 617-638; it reads PLSPYTMYADMKPPTSPLPSPV. Over residues 630–641 the composition is skewed to pro residues; that stretch reads PTSPLPSPVTNH.

As to quaternary structure, part of the Tic complex. Interacts with TIC110 and TIC55. Interacts with LFNR1 and LFNR2. Component of high molecular weight thylakoid LFNRs-containing protein complexes containing LIR1, LFNR1, LFNR2, TIC62 and TROL proteins. In terms of tissue distribution, expressed in cotyledons and leaves, but not in roots.

Its subcellular location is the plastid. It is found in the chloroplast inner membrane. The protein localises to the chloroplast stroma. It localises to the chloroplast thylakoid. Functionally, involved in protein precursor import into chloroplasts. Part of the redox regulon consisting of TIC32, TIC 55 and TIC62. Acts as a membrane anchor of LFNR1 and LFNR2. Has a NADPH-dependent dehydrogenase activity, but only after preincubation with lipids. This Arabidopsis thaliana (Mouse-ear cress) protein is Protein TIC 62, chloroplastic.